Here is a 682-residue protein sequence, read N- to C-terminus: MLPELSAIQAEMQQQGLRRLLVLSGDHNWCHQQAHELQQEFMGDWLWISYRKEKAVLPEKAAGLLGQEYLHGVFDATEGLNAEALAILAGTLKAGSWLVMMVPSWHQWNDQPDRDSIRWNEQSGAIPTPNFIQHIQRQIANDRQVLLWRQNDPFYIPELPQYREWQLPDGQPTAHQHTILARLLRANQGVWVIIAPRGRGKSTLAGMLIQQWQGHCWLTAPAKATTEVVRCYSSEKGQFWAVDNLLKYCRQNSVSDIDWLLIDEAAAIPTPQLFELISYFPRILLTTTVQGYEGTGRGFLHKFCAEIPGCHILNLTEPMRWAESDPLENWLEEALLFDDAVPANHSAKAIGYHVYQQQQWIQQPELLKQFYGILTSAHYKTSPLDLRRLLDAKGMQFVAALGNNTLIGALWMVEEGGLSAELAHEIWAGRRRPRGNLVAQSLAAHSGLPQAAVLKSQRISRVAVQVNRRRQGIAQGMIAFQRERAEEQGMDFISVSFGYTAELWALWQKCGFQLVRIGTHLEASSGCYTAMAIFPLSQQGIALCVQAQQQLARDAYWLESQIGFSLPVDDQADQRLNQNDWQELAGFAFAHRPLSASLPALQRLLLNCGLPLTALRNHLQREMSIEQCVTELRLNGHKALTLLWRQETAQALVSLDEKLAMYWQEWTTVFSEANRLHHPICH.

Residues Gln176, 198–207 (GRGKSTLAGM), and Arg320 contribute to the ATP site. The region spanning 357 to 534 (QQQWIQQPEL…SGCYTAMAIF (178 aa)) is the N-acetyltransferase domain. Residues 462–464 (VAV) and Glu502 contribute to the acetyl-CoA site.

This sequence belongs to the RNA cytidine acetyltransferase family. TmcA subfamily.

The protein localises to the cytoplasm. The enzyme catalyses cytidine(34) in elongator tRNA(Met) + acetyl-CoA + ATP + H2O = N(4)-acetylcytidine(34) in elongator tRNA(Met) + ADP + phosphate + CoA + H(+). In terms of biological role, catalyzes the formation of N(4)-acetylcytidine (ac(4)C) at the wobble position of tRNA(Met), by using acetyl-CoA as an acetyl donor and ATP (or GTP). The sequence is that of tRNA(Met) cytidine acetyltransferase TmcA from Photorhabdus asymbiotica subsp. asymbiotica (strain ATCC 43949 / 3105-77) (Xenorhabdus luminescens (strain 2)).